A 902-amino-acid chain; its full sequence is Zinc finger CCCH-type antiviral protein 1 (902 aa).

At Ala-2 the chain carries N-acetylalanine. The interval 2 to 254 (ADPEVCCFIT…ARSKSRDRFF (253 aa)) is N-terminal domain. The Nuclear localization signal signature appears at 69-76 (RARVCRRK). C3H1-type zinc fingers lie at residues 73 to 86 (CRRK…DNLH), 88 to 110 (CKLN…KYSH), 150 to 172 (CKSY…SRLH), and 169 to 193 (SRLH…SHNL). Residues 221 to 251 (SKHMQKNPPGPRAPSSHRRNMAYRARSKSRD) form a disordered region. The tract at residues 224 to 254 (MQKNPPGPRAPSSHRRNMAYRARSKSRDRFF) is binding to EXOSC5. A compositionally biased stretch (basic residues) spans 235–247 (SSHRRNMAYRARS). Phosphoserine; by GSK3-beta occurs at positions 257, 263, 267, and 271. Over residues 265–278 (SASAERSCTPSPDQ) the composition is skewed to polar residues. Disordered regions lie at residues 265-287 (SASA…SLED) and 299-373 (YLGS…GARR). A Phosphothreonine modification is found at Thr-273. A phosphoserine mark is found at Ser-275 and Ser-284. The short motif at 285–292 (LEDAPVDD) is the Nuclear export signal element. Ser-302, Ser-327, Ser-335, Ser-355, Ser-378, and Ser-387 each carry phosphoserine. Polar residues-rich tracts occupy residues 310–336 (SGSS…NGSQ) and 344–369 (PGST…TNDQ). Phosphothreonine is present on Thr-393. Phosphoserine occurs at positions 407, 469, 492, and 494. Residues 445–481 (LNYKSTSSGHREISSPRIQDAGPASRDVQATGRIADD) are disordered. At Thr-554 the chain carries Phosphothreonine. Tyr-572 and Ser-590 each carry phosphoserine. Residues 594-681 (SVTKPANSVF…ASKTQKDVIR (88 aa)) form the WWE domain. The PARP catalytic domain maps to 716-902 (PQEDFCFLSS…YTEDKACVIS (187 aa)).

The protein belongs to the ARTD/PARP family. As to quaternary structure, homodimer or homooligomer. Homooligomerization is essential for its antiviral activity. Interacts with EXOSC5. Interacts (via N-terminal domain) with DDX17 in an RNA-independent manner. Interacts with EXOSC3, EXOSC7, DCP2 and DCP1A. Interacts with PARN in an RNA-independent manner. Interacts with XRN1 in an RNA-dependent manner. Isoform 2 interacts (via zinc-fingers) with RIGI in an RNA-dependent manner. Interacts (via N-terminal domain) with DHX30 (via N-terminus) in an RNA-independent manner. Post-translationally, phosphorylation at Ser-275 is essential for sequential phosphorylation of Ser-271, Ser-267, Ser-263 and Ser-257 by GSK3-beta. Phosphorylation by GSK3-beta enhances its antiviral activity.

It localises to the cytoplasm. It is found in the nucleus. Functionally, antiviral protein which inhibits the replication of viruses by recruiting the cellular RNA degradation machineries to degrade the viral mRNAs. Binds to a ZAP-responsive element (ZRE) present in the target viral mRNA, recruits cellular poly(A)-specific ribonuclease PARN to remove the poly(A) tail, and the 3'-5' exoribonuclease complex exosome to degrade the RNA body from the 3'-end. It also recruits the decapping complex DCP1-DCP2 through RNA helicase p72 (DDX17) to remove the cap structure of the viral mRNA to initiate its degradation from the 5'-end. Its target viruses belong to families which include retroviridae: human immunodeficiency virus type 1 (HIV-1), moloney and murine leukemia virus (MoMLV) and xenotropic MuLV-related virus (XMRV), filoviridae: ebola virus (EBOV) and marburg virus (MARV), togaviridae: sindbis virus (SINV) and Ross river virus (RRV). Specifically targets the multiply spliced but not unspliced or singly spliced HIV-1 mRNAs for degradation. Isoform 1 is a more potent viral inhibitor than isoform 2. Isoform 2 acts as a positive regulator of RIGI signaling resulting in activation of the downstream effector IRF3 leading to the expression of type I IFNs and IFN stimulated genes (ISGs). The chain is Zinc finger CCCH-type antiviral protein 1 from Homo sapiens (Human).